The primary structure comprises 110 residues: Nucleoid-associated protein KPN78578_04440 (110 aa).

Belongs to the YbaB/EbfC family. In terms of assembly, homodimer.

The protein resides in the cytoplasm. The protein localises to the nucleoid. Binds to DNA and alters its conformation. May be involved in regulation of gene expression, nucleoid organization and DNA protection. This chain is Nucleoid-associated protein KPN78578_04440, found in Klebsiella pneumoniae subsp. pneumoniae (strain ATCC 700721 / MGH 78578).